The following is a 441-amino-acid chain: ATP-dependent RNA helicase RhlB (441 aa).

Residues 9-37 (QKFADFSLNKEIKTALNESGFEFCTPIQA) carry the Q motif motif. The region spanning 40–219 (LPILLQKKDI…YDHMNEPEKV (180 aa)) is the Helicase ATP-binding domain. 53-60 (AQTGTGKT) contributes to the ATP binding site. A DEAD box motif is present at residues 165 to 168 (DEAD). A Helicase C-terminal domain is found at 243-390 (KMRLLLSLIE…VTNYDSEGLL (148 aa)). Residues 401 to 441 (RKHNNRPQQGRNNSGRPQGRNGNRAGGRNGPRRHDQVRRHS) are disordered.

This sequence belongs to the DEAD box helicase family. RhlB subfamily. In terms of assembly, component of the RNA degradosome, which is a multiprotein complex involved in RNA processing and mRNA degradation.

It localises to the cytoplasm. It carries out the reaction ATP + H2O = ADP + phosphate + H(+). DEAD-box RNA helicase involved in RNA degradation. Has RNA-dependent ATPase activity and unwinds double-stranded RNA. The sequence is that of ATP-dependent RNA helicase RhlB from Shewanella woodyi (strain ATCC 51908 / MS32).